The following is a 535-amino-acid chain: Probable lipid II flippase MurJ (535 aa).

12 helical membrane-spanning segments follow: residues 90–110 (VLFT…PFIV), 131–151 (FATI…MAGM), 159–179 (FAAA…LAYA), 192–212 (DLSW…WVAV), 233–253 (LLVL…NLLI), 274–294 (IYQL…LPEL), 316–336 (FTLF…EPIV), 350–370 (TVVV…FVLI), 388–408 (IFAG…FPSL), 413–433 (IATA…ATLV), 451–471 (LVIA…WLAF), and 484–504 (LTLC…AFGI).

Belongs to the MurJ/MviN family.

The protein localises to the cell inner membrane. It participates in cell wall biogenesis; peptidoglycan biosynthesis. In terms of biological role, involved in peptidoglycan biosynthesis. Transports lipid-linked peptidoglycan precursors from the inner to the outer leaflet of the cytoplasmic membrane. In Rhizobium meliloti (strain 1021) (Ensifer meliloti), this protein is Probable lipid II flippase MurJ.